The following is a 320-amino-acid chain: Cytochrome f (320 aa).

Positions 1 to 35 are cleaved as a signal peptide; sequence MQTRKTLSWIKEEITRSISVSLMIYIITGAYISNA. Heme-binding residues include Tyr36, Cys56, Cys59, and His60. A helical transmembrane segment spans residues 286 to 306; that stretch reads VQGLLFFLASVILAQIFLVLK.

This sequence belongs to the cytochrome f family. The 4 large subunits of the cytochrome b6-f complex are cytochrome b6, subunit IV (17 kDa polypeptide, petD), cytochrome f and the Rieske protein, while the 4 small subunits are PetG, PetL, PetM and PetN. The complex functions as a dimer. Heme serves as cofactor.

It is found in the plastid. It localises to the chloroplast thylakoid membrane. Functionally, component of the cytochrome b6-f complex, which mediates electron transfer between photosystem II (PSII) and photosystem I (PSI), cyclic electron flow around PSI, and state transitions. In Populus alba (White poplar), this protein is Cytochrome f.